The primary structure comprises 282 residues: PAK4-inhibitor INKA1 (282 aa).

2 disordered regions span residues 21 to 50 (RDTGSPPMSGPLQPKPRTDQNVQPKRQFRA) and 92 to 127 (GFSEVSGSTWREEEPSVPQRQAPRERPPHSQRFSVS). Inka box regions lie at residues 163-200 (EAEDWTAALLNRGRSRQPLVLGDNCFADLVHNWMELPE) and 256-282 (PADISRFAALMNCRSRQPIIYNDVSYL).

It belongs to the INKA family. Interacts with PAK4. As to expression, expressed in tissues of the developing head during neurulation.

It is found in the nucleus. The protein resides in the cytoplasm. In terms of biological role, inhibitor of the serine/threonine-protein kinase PAK4. Acts by binding PAK4 in a substrate-like manner, inhibiting the protein kinase activity. This Mus musculus (Mouse) protein is PAK4-inhibitor INKA1.